The primary structure comprises 306 residues: Acetylglutamate kinase (306 aa).

Substrate-binding positions include 75-76 (GG), Arg97, and Asn197.

This sequence belongs to the acetylglutamate kinase family. ArgB subfamily.

It localises to the cytoplasm. It carries out the reaction N-acetyl-L-glutamate + ATP = N-acetyl-L-glutamyl 5-phosphate + ADP. The protein operates within amino-acid biosynthesis; L-arginine biosynthesis; N(2)-acetyl-L-ornithine from L-glutamate: step 2/4. Functionally, catalyzes the ATP-dependent phosphorylation of N-acetyl-L-glutamate. This Streptomyces coelicolor (strain ATCC BAA-471 / A3(2) / M145) protein is Acetylglutamate kinase.